The primary structure comprises 930 residues: Protein translocase subunit SecA (930 aa).

Residues Gln87, 105–109 (GEGKT), and Asp516 contribute to the ATP site. Zn(2+) contacts are provided by Cys914, Cys916, Cys925, and His926.

Belongs to the SecA family. In terms of assembly, monomer and homodimer. Part of the essential Sec protein translocation apparatus which comprises SecA, SecYEG and auxiliary proteins SecDF-YajC and YidC. Requires Zn(2+) as cofactor.

Its subcellular location is the cell inner membrane. It localises to the cytoplasm. The enzyme catalyses ATP + H2O + cellular proteinSide 1 = ADP + phosphate + cellular proteinSide 2.. Functionally, part of the Sec protein translocase complex. Interacts with the SecYEG preprotein conducting channel. Has a central role in coupling the hydrolysis of ATP to the transfer of proteins into and across the cell membrane, serving both as a receptor for the preprotein-SecB complex and as an ATP-driven molecular motor driving the stepwise translocation of polypeptide chains across the membrane. In Variovorax paradoxus (strain S110), this protein is Protein translocase subunit SecA.